The chain runs to 144 residues: Large ribosomal subunit protein uL15 (144 aa).

The interval 1 to 53 (MRLNTLSPAEGAKHSAKRLGRGIGSGLGKTGGRGHKGQKSRTGGGVRRGFEGG) is disordered. Positions 21–31 (RGIGSGLGKTG) are enriched in gly residues.

It belongs to the universal ribosomal protein uL15 family. In terms of assembly, part of the 50S ribosomal subunit.

Functionally, binds to the 23S rRNA. The protein is Large ribosomal subunit protein uL15 of Pasteurella multocida (strain Pm70).